Here is a 409-residue protein sequence, read N- to C-terminus: Multifunctional CCA protein (409 aa).

ATP-binding residues include Gly8 and Arg11. Positions 8 and 11 each coordinate CTP. Glu21 and Asp23 together coordinate Mg(2+). ATP is bound by residues Arg91, Arg137, and Arg140. Arg91, Arg137, and Arg140 together coordinate CTP. The 102-residue stretch at 228-329 (TGVHTLMVLT…LKALEGLDAF (102 aa)) folds into the HD domain.

This sequence belongs to the tRNA nucleotidyltransferase/poly(A) polymerase family. Bacterial CCA-adding enzyme type 1 subfamily. In terms of assembly, monomer. Can also form homodimers and oligomers. Mg(2+) serves as cofactor. It depends on Ni(2+) as a cofactor.

It catalyses the reaction a tRNA precursor + 2 CTP + ATP = a tRNA with a 3' CCA end + 3 diphosphate. The enzyme catalyses a tRNA with a 3' CCA end + 2 CTP + ATP = a tRNA with a 3' CCACCA end + 3 diphosphate. Its function is as follows. Catalyzes the addition and repair of the essential 3'-terminal CCA sequence in tRNAs without using a nucleic acid template. Adds these three nucleotides in the order of C, C, and A to the tRNA nucleotide-73, using CTP and ATP as substrates and producing inorganic pyrophosphate. tRNA 3'-terminal CCA addition is required both for tRNA processing and repair. Also involved in tRNA surveillance by mediating tandem CCA addition to generate a CCACCA at the 3' terminus of unstable tRNAs. While stable tRNAs receive only 3'-terminal CCA, unstable tRNAs are marked with CCACCA and rapidly degraded. In Thioalkalivibrio sulfidiphilus (strain HL-EbGR7), this protein is Multifunctional CCA protein.